The sequence spans 466 residues: 3-isopropylmalate dehydratase large subunit (466 aa).

[4Fe-4S] cluster contacts are provided by Cys347, Cys407, and Cys410.

Belongs to the aconitase/IPM isomerase family. LeuC type 1 subfamily. Heterodimer of LeuC and LeuD. It depends on [4Fe-4S] cluster as a cofactor.

It catalyses the reaction (2R,3S)-3-isopropylmalate = (2S)-2-isopropylmalate. It functions in the pathway amino-acid biosynthesis; L-leucine biosynthesis; L-leucine from 3-methyl-2-oxobutanoate: step 2/4. In terms of biological role, catalyzes the isomerization between 2-isopropylmalate and 3-isopropylmalate, via the formation of 2-isopropylmaleate. The protein is 3-isopropylmalate dehydratase large subunit of Escherichia coli O127:H6 (strain E2348/69 / EPEC).